The chain runs to 887 residues: Cadherin-1 (887 aa).

The N-terminal stretch at Met-1–Gly-26 is a signal peptide. A propeptide spanning residues Arg-27–Arg-160 is cleaved from the precursor. 5 consecutive Cadherin domains span residues Asp-161–Phe-268, Ile-269–Phe-381, Asn-382–Phe-493, Val-494–Pro-599, and Thr-600–Tyr-704. Over Asp-161–Ile-714 the chain is Extracellular. Position 263 (Asp-263) interacts with Ca(2+). Asn-291 is a glycosylation site (N-linked (GlcNAc...) asparagine). A Ca(2+)-binding site is contributed by Asp-294. A glycan (N-linked (GlcNAc...) asparagine) is linked at Asn-346. Asn-564 and Asn-643 each carry an N-linked (GlcNAc...) asparagine glycan. Residues Leu-715–Ala-735 traverse the membrane as a helical segment. Over Arg-736–Glu-887 the chain is Cytoplasmic. The interval Leu-745–Asp-770 is disordered. Residues Tyr-759–Asp-770 show a composition bias toward acidic residues.

As to quaternary structure, homodimer. Interacts with CTNNA2. As to expression, expressed in the liver.

It localises to the cell junction. Its subcellular location is the adherens junction. The protein localises to the cell membrane. The protein resides in the endosome. It is found in the golgi apparatus. It localises to the trans-Golgi network. Its subcellular location is the cytoplasm. The protein localises to the desmosome. Its function is as follows. Cadherins are calcium-dependent cell adhesion proteins. They preferentially interact with themselves in a homophilic manner in connecting cells; cadherins may thus contribute to the sorting of heterogeneous cell types. Promotes organization of radial actin fiber structure and cellular response to contractile forces, via anchoring of radial actin fibers to CDH1 junction complexes at the cell membrane. E-cadherin is a ligand for integrin alpha-E/beta-7. The polypeptide is Cadherin-1 (CDH1) (Gallus gallus (Chicken)).